A 501-amino-acid chain; its full sequence is MNELLTLTAAELGERIAARQISSEEVTQAHLDRISEVDGDIHAFLLVDHAGALDAARRIDARIADGEHLGPLAGVPLAVKDLFCTKGIATTASSQMLEGWIPPYDSTIVTRCKDAGMVILGKTNLDEFAMGSSTETSAFGPTHNPWDLERVPGGSGGGSAASLASFQAPLALGTDTGGSIRQPGAVTGTVGIKPTYGSTSRYGVIAMASSLDTPGPCARTVLDAALLHQAIAGHDAMDQTTINQPTPAVVEAARQTDVSGVRIGVVTELSGQVYDPQVEARFHEAVEMLIEAGAEVVEVSCPNFDLALPAYYLIQPAEVSSNLARYDAMRYGLRVNDDGEHSAEQVMRATRGAGLGAEAKRRIILGTYALSAGYYDAYYGSAQKVRTLIQRDFEKAWQMCDVLVSPATPTTAFRLGERTADPMAMYRSDLCTVPANMAGSPAGSFPIGLSETDGMPVGMQVMAPIMADDRIYRVGAALERLLHEKWGAPLLAKAPEVRGER.

Residues Lys-80 and Ser-155 each act as charge relay system in the active site. Ser-179 serves as the catalytic Acyl-ester intermediate.

It belongs to the amidase family. GatA subfamily. Heterotrimer of A, B and C subunits.

The enzyme catalyses L-glutamyl-tRNA(Gln) + L-glutamine + ATP + H2O = L-glutaminyl-tRNA(Gln) + L-glutamate + ADP + phosphate + H(+). Functionally, allows the formation of correctly charged Gln-tRNA(Gln) through the transamidation of misacylated Glu-tRNA(Gln) in organisms which lack glutaminyl-tRNA synthetase. The reaction takes place in the presence of glutamine and ATP through an activated gamma-phospho-Glu-tRNA(Gln). This is Glutamyl-tRNA(Gln) amidotransferase subunit A from Cutibacterium acnes (strain DSM 16379 / KPA171202) (Propionibacterium acnes).